We begin with the raw amino-acid sequence, 121 residues long: Aspartate 1-decarboxylase (121 aa).

Ser-25 acts as the Schiff-base intermediate with substrate; via pyruvic acid in catalysis. Residue Ser-25 is modified to Pyruvic acid (Ser). Thr-57 provides a ligand contact to substrate. Tyr-58 serves as the catalytic Proton donor. Residue 73–75 coordinates substrate; sequence GAA.

The protein belongs to the PanD family. In terms of assembly, heterooctamer of four alpha and four beta subunits. Pyruvate is required as a cofactor. Is synthesized initially as an inactive proenzyme, which is activated by self-cleavage at a specific serine bond to produce a beta-subunit with a hydroxyl group at its C-terminus and an alpha-subunit with a pyruvoyl group at its N-terminus.

Its subcellular location is the cytoplasm. The catalysed reaction is L-aspartate + H(+) = beta-alanine + CO2. The protein operates within cofactor biosynthesis; (R)-pantothenate biosynthesis; beta-alanine from L-aspartate: step 1/1. Its function is as follows. Catalyzes the pyruvoyl-dependent decarboxylation of aspartate to produce beta-alanine. This chain is Aspartate 1-decarboxylase, found in Sulfurimonas denitrificans (strain ATCC 33889 / DSM 1251) (Thiomicrospira denitrificans (strain ATCC 33889 / DSM 1251)).